The primary structure comprises 97 residues: Large ribosomal subunit protein bL28 (97 aa).

Belongs to the bacterial ribosomal protein bL28 family.

The protein is Large ribosomal subunit protein bL28 of Rickettsia canadensis (strain McKiel).